Reading from the N-terminus, the 48-residue chain is Small polypeptide DEVIL 22 (48 aa).

The helical transmembrane segment at lysine 7 to lysine 23 threads the bilayer. The required for DVL/RTFL small polypeptide activity stretch occupies residues alanine 13–isoleucine 44.

Belongs to the DVL/RTFL small polypeptides family.

The protein localises to the cell membrane. Small polypeptide acting as a regulatory molecule which coordinates cellular responses required for differentiation, growth and development, probably by restricting polar cell proliferation in lateral organs and coordinating socket cell recruitment and differentiation at trichome sites. The chain is Small polypeptide DEVIL 22 from Arabidopsis thaliana (Mouse-ear cress).